The following is a 246-amino-acid chain: uncharacterized protein (246 aa).

This is an uncharacterized protein from Acidianus sp. F28 (AFV-2).